The sequence spans 860 residues: Leucine--tRNA ligase (860 aa).

A 'HIGH' region motif is present at residues 42–52; that stretch reads PYPSGRLHMGH. Positions 619–623 match the 'KMSKS' region motif; the sequence is KMSKS. Residue Lys622 participates in ATP binding.

The protein belongs to the class-I aminoacyl-tRNA synthetase family.

It is found in the cytoplasm. It catalyses the reaction tRNA(Leu) + L-leucine + ATP = L-leucyl-tRNA(Leu) + AMP + diphosphate. In Citrobacter koseri (strain ATCC BAA-895 / CDC 4225-83 / SGSC4696), this protein is Leucine--tRNA ligase.